We begin with the raw amino-acid sequence, 102 residues long: MEPVDPRLEPWKHPGSQPKTACNNCYCKKCCYHCQVCFLTKGLGISYGRKKRRQRRGPPQGSQTHQVSLSKQPTSQPRGDPTGPKESKEKVERETETDPAVQ.

The segment at 1-24 (MEPVDPRLEPWKHPGSQPKTACNN) is interaction with human CREBBP. Positions 1-48 (MEPVDPRLEPWKHPGSQPKTACNNCYCKKCCYHCQVCFLTKGLGISYG) are transactivation. Positions 22, 25, and 27 each coordinate Zn(2+). The interval 22–37 (CNNCYCKKCCYHCQVC) is cysteine-rich. Lysine 28 bears the N6-acetyllysine; by host PCAF mark. Zn(2+) is bound by residues cysteine 30, histidine 33, cysteine 34, and cysteine 37. Residues 38–48 (FLTKGLGISYG) form a core region. The segment at 48–102 (GRKKRRQRRGPPQGSQTHQVSLSKQPTSQPRGDPTGPKESKEKVERETETDPAVQ) is disordered. Residues 49–57 (RKKRRQRRG) carry the Nuclear localization signal, RNA-binding (TAR), and protein transduction motif. The interaction with the host capping enzyme RNGTT stretch occupies residues 49-86 (RKKRRQRRGPPQGSQTHQVSLSKQPTSQPRGDPTGPKE). N6-acetyllysine; by host EP300 and GCN5L2 occurs at positions 50 and 51. Asymmetric dimethylarginine; by host PRMT6 occurs at positions 52 and 53. Residues 62-77 (SQTHQVSLSKQPTSQP) are compositionally biased toward polar residues. A Glycyl lysine isopeptide (Lys-Gly) (interchain with G-Cter in ubiquitin) cross-link involves residue lysine 71. The Cell attachment site signature appears at 78–80 (RGD). Over residues 83-96 (GPKESKEKVERETE) the composition is skewed to basic and acidic residues.

This sequence belongs to the lentiviruses Tat family. Interacts with host CCNT1. Associates with the P-TEFb complex composed at least of Tat, P-TEFb (CDK9 and CCNT1), TAR RNA, RNA Pol II. Recruits the HATs CREBBP, TAF1/TFIID, EP300, PCAF and GCN5L2. Interacts with host KAT5/Tip60; this interaction targets the latter to degradation. Interacts with the host deacetylase SIRT1. Interacts with host capping enzyme RNGTT; this interaction stimulates RNGTT. Binds to host KDR, and to the host integrins ITGAV/ITGB3 and ITGA5/ITGB1. Interacts with host KPNB1/importin beta-1 without previous binding to KPNA1/importin alpha-1. Interacts with EIF2AK2. Interacts with host nucleosome assembly protein NAP1L1; this interaction may be required for the transport of Tat within the nucleus, since the two proteins interact at the nuclear rim. Interacts with host C1QBP/SF2P32; this interaction involves lysine-acetylated Tat. Interacts with the host chemokine receptors CCR2, CCR3 and CXCR4. Interacts with host DPP4/CD26; this interaction may trigger an anti-proliferative effect. Interacts with host LDLR. Interacts with the host extracellular matrix metalloproteinase MMP1. Interacts with host PRMT6; this interaction mediates Tat's methylation. Interacts with, and is ubiquitinated by MDM2/Hdm2. Interacts with host PSMC3 and HTATIP2. Interacts with STAB1; this interaction may overcome SATB1-mediated repression of IL2 and IL2RA (interleukin) in T cells by binding to the same domain than HDAC1. Interacts (when acetylated) with human CDK13, thereby increasing HIV-1 mRNA splicing and promoting the production of the doubly spliced HIV-1 protein Nef. Interacts with host TBP; this interaction modulates the activity of transcriptional pre-initiation complex. Interacts with host RELA. Interacts with host PLSCR1; this interaction negatively regulates Tat transactivation activity by altering its subcellular distribution. Asymmetrical arginine methylation by host PRMT6 seems to diminish the transactivation capacity of Tat and affects the interaction with host CCNT1. In terms of processing, acetylation by EP300, CREBBP, GCN5L2/GCN5 and PCAF regulates the transactivation activity of Tat. EP300-mediated acetylation of Lys-50 promotes dissociation of Tat from the TAR RNA through the competitive binding to PCAF's bromodomain. In addition, the non-acetylated Tat's N-terminus can also interact with PCAF. PCAF-mediated acetylation of Lys-28 enhances Tat's binding to CCNT1. Lys-50 is deacetylated by SIRT1. Post-translationally, polyubiquitination by host MDM2 does not target Tat to degradation, but activates its transactivation function and fosters interaction with CCNT1 and TAR RNA. Phosphorylated by EIF2AK2 on serine and threonine residues adjacent to the basic region important for TAR RNA binding and function. Phosphorylation of Tat by EIF2AK2 is dependent on the prior activation of EIF2AK2 by dsRNA.

The protein localises to the host nucleus. Its subcellular location is the host nucleolus. It localises to the host cytoplasm. It is found in the secreted. Its function is as follows. Transcriptional activator that increases RNA Pol II processivity, thereby increasing the level of full-length viral transcripts. Recognizes a hairpin structure at the 5'-LTR of the nascent viral mRNAs referred to as the transactivation responsive RNA element (TAR) and recruits the cyclin T1-CDK9 complex (P-TEFb complex) that will in turn hyperphosphorylate the RNA polymerase II to allow efficient elongation. The CDK9 component of P-TEFb and other Tat-activated kinases hyperphosphorylate the C-terminus of RNA Pol II that becomes stabilized and much more processive. Other factors such as HTATSF1/Tat-SF1, SUPT5H/SPT5, and HTATIP2 are also important for Tat's function. Besides its effect on RNA Pol II processivity, Tat induces chromatin remodeling of proviral genes by recruiting the histone acetyltransferases (HATs) CREBBP, EP300 and PCAF to the chromatin. This also contributes to the increase in proviral transcription rate, especially when the provirus integrates in transcriptionally silent region of the host genome. To ensure maximal activation of the LTR, Tat mediates nuclear translocation of NF-kappa-B by interacting with host RELA. Through its interaction with host TBP, Tat may also modulate transcription initiation. Tat can reactivate a latently infected cell by penetrating in it and transactivating its LTR promoter. In the cytoplasm, Tat is thought to act as a translational activator of HIV-1 mRNAs. Extracellular circulating Tat can be endocytosed by surrounding uninfected cells via the binding to several surface receptors such as CD26, CXCR4, heparan sulfate proteoglycans (HSPG) or LDLR. Neurons are rarely infected, but they internalize Tat via their LDLR. Through its interaction with nuclear HATs, Tat is potentially able to control the acetylation-dependent cellular gene expression. Modulates the expression of many cellular genes involved in cell survival, proliferation or in coding for cytokines or cytokine receptors. Tat plays a role in T-cell and neurons apoptosis. Tat induced neurotoxicity and apoptosis probably contribute to neuroAIDS. Circulating Tat also acts as a chemokine-like and/or growth factor-like molecule that binds to specific receptors on the surface of the cells, affecting many cellular pathways. In the vascular system, Tat binds to ITGAV/ITGB3 and ITGA5/ITGB1 integrins dimers at the surface of endothelial cells and competes with bFGF for heparin-binding sites, leading to an excess of soluble bFGF. The sequence is that of Protein Tat from Human immunodeficiency virus type 1 group M subtype B (isolate RF/HAT3) (HIV-1).